The primary structure comprises 120 residues: Small ribosomal subunit protein eS24 (120 aa).

A disordered region spans residues 101 to 120 (RDAGTKQKKGGSKGGQGAKG).

It belongs to the eukaryotic ribosomal protein eS24 family.

This chain is Small ribosomal subunit protein eS24, found in Saccharolobus islandicus (strain M.16.27) (Sulfolobus islandicus).